The primary structure comprises 346 residues: Dihydroorotase (346 aa).

Positions 14 and 16 each coordinate Zn(2+). Residues 16-18 (HLR) and asparagine 42 each bind substrate. Zn(2+) contacts are provided by lysine 100, histidine 137, and histidine 175. Lysine 100 carries the post-translational modification N6-carboxylysine. Residue histidine 137 coordinates substrate. Leucine 220 contacts substrate. Aspartate 248 is a binding site for Zn(2+). Aspartate 248 is a catalytic residue. Histidine 252 and alanine 264 together coordinate substrate.

This sequence belongs to the metallo-dependent hydrolases superfamily. DHOase family. Class II DHOase subfamily. Homodimer. The cofactor is Zn(2+).

The enzyme catalyses (S)-dihydroorotate + H2O = N-carbamoyl-L-aspartate + H(+). The protein operates within pyrimidine metabolism; UMP biosynthesis via de novo pathway; (S)-dihydroorotate from bicarbonate: step 3/3. Its function is as follows. Catalyzes the reversible cyclization of carbamoyl aspartate to dihydroorotate. In Ruegeria pomeroyi (strain ATCC 700808 / DSM 15171 / DSS-3) (Silicibacter pomeroyi), this protein is Dihydroorotase.